The chain runs to 135 residues: Large ribosomal subunit protein bL21 (135 aa).

Residues 85–135 (YRVKRGHRQQYTQIEIESLNANGPASSDDEEAAETSDAEPDEDPEAEPAEA) are disordered. Polar residues predominate over residues 93 to 107 (QQYTQIEIESLNANG). Residues 111–135 (SDDEEAAETSDAEPDEDPEAEPAEA) show a composition bias toward acidic residues.

The protein belongs to the bacterial ribosomal protein bL21 family. Part of the 50S ribosomal subunit. Contacts protein L20.

Its function is as follows. This protein binds to 23S rRNA in the presence of protein L20. The sequence is that of Large ribosomal subunit protein bL21 from Salinibacter ruber (strain DSM 13855 / M31).